The following is a 451-amino-acid chain: Probable glycine dehydrogenase (decarboxylating) subunit 1 (451 aa).

Belongs to the GcvP family. N-terminal subunit subfamily. The glycine cleavage system is composed of four proteins: P, T, L and H. In this organism, the P 'protein' is a heterodimer of two subunits.

The enzyme catalyses N(6)-[(R)-lipoyl]-L-lysyl-[glycine-cleavage complex H protein] + glycine + H(+) = N(6)-[(R)-S(8)-aminomethyldihydrolipoyl]-L-lysyl-[glycine-cleavage complex H protein] + CO2. Its function is as follows. The glycine cleavage system catalyzes the degradation of glycine. The P protein binds the alpha-amino group of glycine through its pyridoxal phosphate cofactor; CO(2) is released and the remaining methylamine moiety is then transferred to the lipoamide cofactor of the H protein. In Staphylococcus aureus (strain MSSA476), this protein is Probable glycine dehydrogenase (decarboxylating) subunit 1.